The primary structure comprises 305 residues: Urease accessory protein UreD (305 aa).

It belongs to the UreD family. UreD, UreF and UreG form a complex that acts as a GTP-hydrolysis-dependent molecular chaperone, activating the urease apoprotein by helping to assemble the nickel containing metallocenter of UreC. The UreE protein probably delivers the nickel.

It is found in the cytoplasm. Its function is as follows. Required for maturation of urease via the functional incorporation of the urease nickel metallocenter. In Delftia acidovorans (strain DSM 14801 / SPH-1), this protein is Urease accessory protein UreD.